The primary structure comprises 201 residues: NADH-quinone oxidoreductase subunit C (201 aa).

It belongs to the complex I 30 kDa subunit family. As to quaternary structure, NDH-1 is composed of 14 different subunits. Subunits NuoB, C, D, E, F, and G constitute the peripheral sector of the complex.

The protein resides in the cell inner membrane. The enzyme catalyses a quinone + NADH + 5 H(+)(in) = a quinol + NAD(+) + 4 H(+)(out). Its function is as follows. NDH-1 shuttles electrons from NADH, via FMN and iron-sulfur (Fe-S) centers, to quinones in the respiratory chain. The immediate electron acceptor for the enzyme in this species is believed to be ubiquinone. Couples the redox reaction to proton translocation (for every two electrons transferred, four hydrogen ions are translocated across the cytoplasmic membrane), and thus conserves the redox energy in a proton gradient. The sequence is that of NADH-quinone oxidoreductase subunit C from Mesorhizobium japonicum (strain LMG 29417 / CECT 9101 / MAFF 303099) (Mesorhizobium loti (strain MAFF 303099)).